The primary structure comprises 61 residues: Conotoxin TxMRCL-04 (61 aa).

A signal peptide spans 1-22; sequence MRCLPVFVILLLLIASTPSVDA. Positions 23–46 are excised as a propeptide; that stretch reads QLKTKDDMSLASFHDNVKRILQIR.

The protein belongs to the conotoxin T superfamily. Post-translationally, contains 2 disulfide bonds that can be either 'C1-C3, C2-C4' or 'C1-C4, C2-C3', since these disulfide connectivities have been observed for conotoxins with cysteine framework V (for examples, see AC P0DQQ7 and AC P81755). In terms of tissue distribution, expressed by the venom duct.

The protein localises to the secreted. This is Conotoxin TxMRCL-04 from Conus textile (Cloth-of-gold cone).